The sequence spans 174 residues: MGLVVSAAASCGRLRRSRSRSPPPAVLDPSQSPLSLEREAEPELIRVFRCFDTDGDGLISAAEMREFYGCSVDEAEEMVAAADRDGDGFVSIEELRAVMEGGGLDALRAAFDEYDEDGNGVITAEELRRALRRLNLDGMDLTAEQCAEIVAAVDSDGDGVISFDEFKAMMSKQA.

The N-myristoyl glycine moiety is linked to residue Gly-2. The interval 14–35 is disordered; sequence LRRSRSRSPPPAVLDPSQSPLS. 4 EF-hand domains span residues 39–74, 75–100, 102–137, and 141–174; these read EAEPELIRVFRCFDTDGDGLISAAEMREFYGCSVDE, AEEMVAAADRDGDGFVSIEELRAVME, GGLDALRAAFDEYDEDGNGVITAEELRRALRRLNLD, and LTAEQCAEIVAAVDSDGDGVISFDEFKAMMSKQA. Ca(2+) contacts are provided by Asp-52, Asp-54, Asp-56, Glu-63, Asp-83, Asp-85, Asp-87, Glu-94, Asp-115, Asp-117, Asn-119, Glu-126, Asp-154, Asp-156, Asp-158, and Glu-165.

In terms of biological role, potential calcium sensor. The polypeptide is Probable calcium-binding protein CML20 (CML20) (Oryza sativa subsp. japonica (Rice)).